The primary structure comprises 376 residues: Flagellar P-ring protein (376 aa).

Positions 1–29 (MTQRPFSLLSHLGRICLAAAMLAALPAQA) are cleaved as a signal peptide.

It belongs to the FlgI family. The basal body constitutes a major portion of the flagellar organelle and consists of four rings (L,P,S, and M) mounted on a central rod.

The protein localises to the periplasm. The protein resides in the bacterial flagellum basal body. Assembles around the rod to form the L-ring and probably protects the motor/basal body from shearing forces during rotation. The sequence is that of Flagellar P-ring protein from Bordetella avium (strain 197N).